A 241-amino-acid chain; its full sequence is Sugar fermentation stimulation protein homolog (241 aa).

The protein belongs to the SfsA family.

This chain is Sugar fermentation stimulation protein homolog, found in Trichormus variabilis (strain ATCC 29413 / PCC 7937) (Anabaena variabilis).